The following is a 275-amino-acid chain: Expansin-B6 (275 aa).

The signal sequence occupies residues 1–25 (MAARMGSKVAAILAILSVLVVHGSC). A glycan (N-linked (GlcNAc...) asparagine) is linked at Asn33. Residues 64-170 (GGACGFKNVN…RRVPCNYPGL (107 aa)) form the Expansin-like EG45 domain. Disulfide bonds link Cys67–Cys95, Cys98–Cys165, and Cys103–Cys109. One can recognise an Expansin-like CBD domain in the interval 183 to 270 (VYFAVLVEYE…NWSPNSNYRS (88 aa)).

Belongs to the expansin family. Expansin B subfamily. Expressed in internodes.

The protein localises to the secreted. It is found in the cell wall. The protein resides in the membrane. May cause loosening and extension of plant cell walls by disrupting non-covalent bonding between cellulose microfibrils and matrix glucans. No enzymatic activity has been found. May be required for rapid internodal elongation in deepwater rice during submergence. The chain is Expansin-B6 (EXPB6) from Oryza sativa subsp. japonica (Rice).